The chain runs to 459 residues: Argininosuccinate lyase (459 aa).

It belongs to the lyase 1 family. Argininosuccinate lyase subfamily.

The protein resides in the cytoplasm. The catalysed reaction is 2-(N(omega)-L-arginino)succinate = fumarate + L-arginine. It participates in amino-acid biosynthesis; L-arginine biosynthesis; L-arginine from L-ornithine and carbamoyl phosphate: step 3/3. This is Argininosuccinate lyase from Photorhabdus laumondii subsp. laumondii (strain DSM 15139 / CIP 105565 / TT01) (Photorhabdus luminescens subsp. laumondii).